The primary structure comprises 300 residues: Recombination-associated protein RdgC (300 aa).

The protein belongs to the RdgC family.

It is found in the cytoplasm. Its subcellular location is the nucleoid. May be involved in recombination. The polypeptide is Recombination-associated protein RdgC (Herminiimonas arsenicoxydans).